A 131-amino-acid polypeptide reads, in one-letter code: uncharacterized protein (131 aa).

This is an uncharacterized protein from Haemophilus influenzae (strain ATCC 51907 / DSM 11121 / KW20 / Rd).